We begin with the raw amino-acid sequence, 328 residues long: Tetraacyldisaccharide 4'-kinase (328 aa).

Residue 55 to 62 participates in ATP binding; it reads TAGGNGKT.

Belongs to the LpxK family.

It carries out the reaction a lipid A disaccharide + ATP = a lipid IVA + ADP + H(+). It participates in glycolipid biosynthesis; lipid IV(A) biosynthesis; lipid IV(A) from (3R)-3-hydroxytetradecanoyl-[acyl-carrier-protein] and UDP-N-acetyl-alpha-D-glucosamine: step 6/6. Functionally, transfers the gamma-phosphate of ATP to the 4'-position of a tetraacyldisaccharide 1-phosphate intermediate (termed DS-1-P) to form tetraacyldisaccharide 1,4'-bis-phosphate (lipid IVA). The chain is Tetraacyldisaccharide 4'-kinase from Escherichia coli O7:K1 (strain IAI39 / ExPEC).